The following is a 216-amino-acid chain: Ribosomal RNA small subunit methyltransferase G (216 aa).

S-adenosyl-L-methionine-binding positions include glycine 83, methionine 88, 134–135, and arginine 149; that span reads VE.

The protein belongs to the methyltransferase superfamily. RNA methyltransferase RsmG family.

The protein localises to the cytoplasm. It catalyses the reaction guanosine(527) in 16S rRNA + S-adenosyl-L-methionine = N(7)-methylguanosine(527) in 16S rRNA + S-adenosyl-L-homocysteine. In terms of biological role, specifically methylates the N7 position of guanine in position 527 of 16S rRNA. This is Ribosomal RNA small subunit methyltransferase G from Pseudomonas entomophila (strain L48).